Here is a 1028-residue protein sequence, read N- to C-terminus: Carbamoyl phosphate synthase large chain (1028 aa).

The segment at 1–409 is carboxyphosphate synthetic domain; the sequence is MPPRRDLKKI…ALMKALRGLE (409 aa). ATP is bound by residues arginine 129, arginine 169, glycine 175, glycine 176, glutamate 208, valine 210, glutamate 215, glycine 241, valine 242, histidine 243, glutamine 285, and glutamate 299. One can recognise an ATP-grasp 1 domain in the interval 133-328; the sequence is QEAMRRIDLE…IAKIAALLAV (196 aa). Mg(2+) contacts are provided by glutamine 285, glutamate 299, and asparagine 301. Mn(2+) contacts are provided by glutamine 285, glutamate 299, and asparagine 301. The tract at residues 410–549 is oligomerization domain; the sequence is RDVRALAGVR…YSTYELEDEV (140 aa). Residues 550 to 933 form a carbamoyl phosphate synthetic domain region; it reads WPSQKPKVVI…AYYKAELGAG (384 aa). One can recognise an ATP-grasp 2 domain in the interval 674–866; it reads HALCQRLGIP…LAKLAALIAV (193 aa). The ATP site is built by arginine 710, arginine 750, leucine 752, glutamate 757, glycine 782, valine 783, histidine 784, serine 785, glutamine 825, and glutamate 837. The Mg(2+) site is built by glutamine 825, glutamate 837, and asparagine 839. The Mn(2+) site is built by glutamine 825, glutamate 837, and asparagine 839. In terms of domain architecture, MGS-like spans 934–1028; it reads QRLPLSGQVR…QDWHQKAPRG (95 aa). An allosteric domain region spans residues 934 to 1028; that stretch reads QRLPLSGQVR…QDWHQKAPRG (95 aa).

The protein belongs to the CarB family. In terms of assembly, composed of two chains; the small (or glutamine) chain promotes the hydrolysis of glutamine to ammonia, which is used by the large (or ammonia) chain to synthesize carbamoyl phosphate. Tetramer of heterodimers (alpha,beta)4. It depends on Mg(2+) as a cofactor. Mn(2+) serves as cofactor.

The enzyme catalyses hydrogencarbonate + L-glutamine + 2 ATP + H2O = carbamoyl phosphate + L-glutamate + 2 ADP + phosphate + 2 H(+). It catalyses the reaction hydrogencarbonate + NH4(+) + 2 ATP = carbamoyl phosphate + 2 ADP + phosphate + 2 H(+). Its pathway is amino-acid biosynthesis; L-arginine biosynthesis; carbamoyl phosphate from bicarbonate: step 1/1. It functions in the pathway pyrimidine metabolism; UMP biosynthesis via de novo pathway; (S)-dihydroorotate from bicarbonate: step 1/3. Large subunit of the glutamine-dependent carbamoyl phosphate synthetase (CPSase). CPSase catalyzes the formation of carbamoyl phosphate from the ammonia moiety of glutamine, carbonate, and phosphate donated by ATP, constituting the first step of 2 biosynthetic pathways, one leading to arginine and/or urea and the other to pyrimidine nucleotides. The large subunit (synthetase) binds the substrates ammonia (free or transferred from glutamine from the small subunit), hydrogencarbonate and ATP and carries out an ATP-coupled ligase reaction, activating hydrogencarbonate by forming carboxy phosphate which reacts with ammonia to form carbamoyl phosphate. The sequence is that of Carbamoyl phosphate synthase large chain from Thermus thermophilus (strain ATCC BAA-163 / DSM 7039 / HB27).